A 43-amino-acid chain; its full sequence is Thymosin beta-12 (43 aa).

Basic and acidic residues-rich tracts occupy residues 1 to 25 (MSDK…ETQE) and 33 to 43 (ETIEQEKQATA). Residues 1–43 (MSDKPDLAEVSNFDKTKLKKTETQEKNPLPTKETIEQEKQATA) are disordered. Serine 2 is subject to N-acetylserine.

This sequence belongs to the thymosin beta family.

The protein resides in the cytoplasm. The protein localises to the cytoskeleton. In terms of biological role, plays an important role in the organization of the cytoskeleton. Binds to and sequesters actin monomers (G actin) and therefore inhibits actin polymerization. This is Thymosin beta-12 from Oncorhynchus mykiss (Rainbow trout).